The sequence spans 146 residues: Hemoglobin subunit beta-1 (146 aa).

The 145-residue stretch at 2-146 (EWTDAEKSTI…VVAAMGSRYF (145 aa)) folds into the Globin domain. 2 residues coordinate heme b: His-63 and His-92.

The protein belongs to the globin family. Heterotetramer of two alpha chains and two beta chains. As to expression, red blood cells.

Functionally, involved in oxygen transport from gills to the various peripheral tissues. The sequence is that of Hemoglobin subunit beta-1 (hbb1) from Oncorhynchus mykiss (Rainbow trout).